The primary structure comprises 217 residues: MALSDAAIKVQAALNERGLETPMLPKTSTPEERKIKIEHHMREILTLMSLDLTDDSLMDTPRRIAKMYVDEIFSGLDYDNFPKITVIDNKMGFDEMVRVQDISLTSTCEHHLVTIDGLATVAYLPRAKIIGLSKINRIVRFFAQRPQVQERLTQQILVALQTLLETKDVAVKIDAVHFCVKSRGVMDSTSSTTTTSLGGIFKSNPATRAEFLQQAKF.

3 residues coordinate Zn(2+): C108, H111, and C179.

The protein belongs to the GTP cyclohydrolase I family. As to quaternary structure, toroid-shaped homodecamer, composed of two pentamers of five dimers.

It catalyses the reaction GTP + H2O = 7,8-dihydroneopterin 3'-triphosphate + formate + H(+). It participates in cofactor biosynthesis; 7,8-dihydroneopterin triphosphate biosynthesis; 7,8-dihydroneopterin triphosphate from GTP: step 1/1. This chain is GTP cyclohydrolase 1, found in Shewanella denitrificans (strain OS217 / ATCC BAA-1090 / DSM 15013).